The following is a 142-amino-acid chain: Large ribosomal subunit protein uL13 (142 aa).

The protein belongs to the universal ribosomal protein uL13 family. In terms of assembly, part of the 50S ribosomal subunit.

This protein is one of the early assembly proteins of the 50S ribosomal subunit, although it is not seen to bind rRNA by itself. It is important during the early stages of 50S assembly. The chain is Large ribosomal subunit protein uL13 from Alkaliphilus metalliredigens (strain QYMF).